Consider the following 268-residue polypeptide: MNSNYLLLPHFDPSIFTLGDSNIGLRWYGLMYLLGFVFARWLAVRRANRPNSGWTVDQVDSLLFNGFMGVFIGGRVGDVFFYNLDHFLQEPLYLFRVWEGGMSFHGGLIGVIVAMIWTSYSQKRNFWQTADFVAPLIPFGLGLGRIGNFINLELWGRETNVPWAMIFPNDPLLLPRHPSQLYEAFLEGLVLFAILNIFIKKPRPMASVAGLFLIGYGVFRFIVEYVREPEVENFFGIITRGQALCLPMIIGGAFIMAWAYSRKSAVIK.

Transmembrane regions (helical) follow at residues 23 to 43, 62 to 82, 97 to 117, 132 to 152, 179 to 199, 206 to 226, and 241 to 261; these read IGLR…RWLA, LLFN…VFFY, VWEG…AMIW, FVAP…FINL, SQLY…NIFI, ASVA…VEYV, and GQAL…WAYS. Position 145 (arginine 145) interacts with a 1,2-diacyl-sn-glycero-3-phospho-(1'-sn-glycerol).

It belongs to the Lgt family.

It is found in the cell inner membrane. The enzyme catalyses L-cysteinyl-[prolipoprotein] + a 1,2-diacyl-sn-glycero-3-phospho-(1'-sn-glycerol) = an S-1,2-diacyl-sn-glyceryl-L-cysteinyl-[prolipoprotein] + sn-glycerol 1-phosphate + H(+). It participates in protein modification; lipoprotein biosynthesis (diacylglyceryl transfer). Its function is as follows. Catalyzes the transfer of the diacylglyceryl group from phosphatidylglycerol to the sulfhydryl group of the N-terminal cysteine of a prolipoprotein, the first step in the formation of mature lipoproteins. In Haemophilus influenzae (strain PittEE), this protein is Phosphatidylglycerol--prolipoprotein diacylglyceryl transferase.